Here is a 348-residue protein sequence, read N- to C-terminus: Holliday junction branch migration complex subunit RuvB (348 aa).

The segment at threonine 4–tyrosine 198 is large ATPase domain (RuvB-L). Residues leucine 37, arginine 38, glycine 79, lysine 82, threonine 83, threonine 84, glutamate 145–phenylalanine 147, arginine 188, tyrosine 198, and arginine 235 contribute to the ATP site. Residue threonine 83 participates in Mg(2+) binding. The segment at proline 199–glutamine 269 is small ATPAse domain (RuvB-S). The tract at residues serine 272–arginine 348 is head domain (RuvB-H). 2 residues coordinate DNA: arginine 327 and arginine 332.

It belongs to the RuvB family. In terms of assembly, homohexamer. Forms an RuvA(8)-RuvB(12)-Holliday junction (HJ) complex. HJ DNA is sandwiched between 2 RuvA tetramers; dsDNA enters through RuvA and exits via RuvB. An RuvB hexamer assembles on each DNA strand where it exits the tetramer. Each RuvB hexamer is contacted by two RuvA subunits (via domain III) on 2 adjacent RuvB subunits; this complex drives branch migration. In the full resolvosome a probable DNA-RuvA(4)-RuvB(12)-RuvC(2) complex forms which resolves the HJ.

Its subcellular location is the cytoplasm. It catalyses the reaction ATP + H2O = ADP + phosphate + H(+). Its function is as follows. The RuvA-RuvB-RuvC complex processes Holliday junction (HJ) DNA during genetic recombination and DNA repair, while the RuvA-RuvB complex plays an important role in the rescue of blocked DNA replication forks via replication fork reversal (RFR). RuvA specifically binds to HJ cruciform DNA, conferring on it an open structure. The RuvB hexamer acts as an ATP-dependent pump, pulling dsDNA into and through the RuvAB complex. RuvB forms 2 homohexamers on either side of HJ DNA bound by 1 or 2 RuvA tetramers; 4 subunits per hexamer contact DNA at a time. Coordinated motions by a converter formed by DNA-disengaged RuvB subunits stimulates ATP hydrolysis and nucleotide exchange. Immobilization of the converter enables RuvB to convert the ATP-contained energy into a lever motion, pulling 2 nucleotides of DNA out of the RuvA tetramer per ATP hydrolyzed, thus driving DNA branch migration. The RuvB motors rotate together with the DNA substrate, which together with the progressing nucleotide cycle form the mechanistic basis for DNA recombination by continuous HJ branch migration. Branch migration allows RuvC to scan DNA until it finds its consensus sequence, where it cleaves and resolves cruciform DNA. The sequence is that of Holliday junction branch migration complex subunit RuvB from Bifidobacterium longum (strain DJO10A).